Consider the following 154-residue polypeptide: Crossover junction endodeoxyribonuclease RuvC (154 aa).

Catalysis depends on residues D7, E67, and D139. Positions 7, 67, and 139 each coordinate Mg(2+).

It belongs to the RuvC family. In terms of assembly, homodimer which binds Holliday junction (HJ) DNA. The HJ becomes 2-fold symmetrical on binding to RuvC with unstacked arms; it has a different conformation from HJ DNA in complex with RuvA. In the full resolvosome a probable DNA-RuvA(4)-RuvB(12)-RuvC(2) complex forms which resolves the HJ. Mg(2+) is required as a cofactor.

It is found in the cytoplasm. The catalysed reaction is Endonucleolytic cleavage at a junction such as a reciprocal single-stranded crossover between two homologous DNA duplexes (Holliday junction).. Functionally, the RuvA-RuvB-RuvC complex processes Holliday junction (HJ) DNA during genetic recombination and DNA repair. Endonuclease that resolves HJ intermediates. Cleaves cruciform DNA by making single-stranded nicks across the HJ at symmetrical positions within the homologous arms, yielding a 5'-phosphate and a 3'-hydroxyl group; requires a central core of homology in the junction. The consensus cleavage sequence is 5'-(A/T)TT(C/G)-3'. Cleavage occurs on the 3'-side of the TT dinucleotide at the point of strand exchange. HJ branch migration catalyzed by RuvA-RuvB allows RuvC to scan DNA until it finds its consensus sequence, where it cleaves and resolves the cruciform DNA. The sequence is that of Crossover junction endodeoxyribonuclease RuvC from Synechococcus sp. (strain WH7803).